Reading from the N-terminus, the 434-residue chain is Enolase (434 aa).

Gln163 lines the (2R)-2-phosphoglycerate pocket. Glu205 (proton donor) is an active-site residue. Residues Asp242, Glu289, and Asp316 each contribute to the Mg(2+) site. The (2R)-2-phosphoglycerate site is built by Lys341, Arg370, Ser371, and Lys392. The active-site Proton acceptor is Lys341.

Belongs to the enolase family. Requires Mg(2+) as cofactor.

It localises to the cytoplasm. It is found in the secreted. The protein resides in the cell surface. It catalyses the reaction (2R)-2-phosphoglycerate = phosphoenolpyruvate + H2O. Its pathway is carbohydrate degradation; glycolysis; pyruvate from D-glyceraldehyde 3-phosphate: step 4/5. In terms of biological role, catalyzes the reversible conversion of 2-phosphoglycerate (2-PG) into phosphoenolpyruvate (PEP). It is essential for the degradation of carbohydrates via glycolysis. The sequence is that of Enolase from Lacticaseibacillus paracasei (strain ATCC 334 / BCRC 17002 / CCUG 31169 / CIP 107868 / KCTC 3260 / NRRL B-441) (Lactobacillus paracasei).